The sequence spans 149 residues: Ribosome maturation factor RimP (149 aa).

The protein belongs to the RimP family.

Its subcellular location is the cytoplasm. Its function is as follows. Required for maturation of 30S ribosomal subunits. The sequence is that of Ribosome maturation factor RimP from Clostridium acetobutylicum (strain ATCC 824 / DSM 792 / JCM 1419 / IAM 19013 / LMG 5710 / NBRC 13948 / NRRL B-527 / VKM B-1787 / 2291 / W).